A 450-amino-acid chain; its full sequence is Probable cysteine protease ATG4 (450 aa).

Cys-122 (nucleophile) is an active-site residue. Active-site residues include Asp-297 and His-299.

This sequence belongs to the peptidase C54 family.

The protein localises to the cytoplasm. Its subcellular location is the nucleus. It localises to the preautophagosomal structure. It catalyses the reaction [protein]-C-terminal L-amino acid-glycyl-phosphatidylethanolamide + H2O = [protein]-C-terminal L-amino acid-glycine + a 1,2-diacyl-sn-glycero-3-phosphoethanolamine. Cysteine protease that plays a key role in cytoplasm to vacuole transport (Cvt) and autophagy by mediating both proteolytic activation and delipidation of ATG8. Required for selective autophagic degradation of the nucleus (nucleophagy) as well as for mitophagy which contributes to regulate mitochondrial quantity and quality by eliminating the mitochondria to a basal level to fulfill cellular energy requirements and preventing excess ROS production. The protease activity is required for proteolytic activation of ATG8: cleaves the C-terminal amino acid of ATG8 to reveal a C-terminal glycine. ATG8 ubiquitin-like activity requires the exposure of the glycine at the C-terminus for its conjugation to phosphatidylethanolamine (PE) and its insertion to membranes, which is necessary for autophagy. The ATG8-PE conjugate mediates tethering between adjacent membranes and stimulates membrane hemifusion, leading to expansion of the autophagosomal membrane during autophagy. In addition to the protease activity, also catalyzes deconjugation of PE-conjugated forms of ATG8 during macroautophagy: ATG8 delipidation is required to release the protein from membranes, which facilitates multiple events during macroautophagy, and especially for efficient autophagosome biogenesis, the assembly of ATG9-containing tubulovesicular clusters into phagophores/autophagosomes, and for the disassembly of PAS-associated ATG components. ATG8 delipidation by ATG4 also recycles ATG8-PE generated on inappropriate membranes to maintain a reservoir of unlipidated ATG8 that is required for autophagosome formation at the PAS. The polypeptide is Probable cysteine protease ATG4 (ATG4) (Kluyveromyces lactis (strain ATCC 8585 / CBS 2359 / DSM 70799 / NBRC 1267 / NRRL Y-1140 / WM37) (Yeast)).